Reading from the N-terminus, the 238-residue chain is tRNA (guanine-N(7)-)-methyltransferase (238 aa).

S-adenosyl-L-methionine contacts are provided by glutamate 68, glutamate 93, aspartate 120, and aspartate 143. Residue aspartate 143 is part of the active site. Substrate-binding positions include lysine 147, aspartate 179, and 216–219 (TKFE).

Belongs to the class I-like SAM-binding methyltransferase superfamily. TrmB family.

The enzyme catalyses guanosine(46) in tRNA + S-adenosyl-L-methionine = N(7)-methylguanosine(46) in tRNA + S-adenosyl-L-homocysteine. It functions in the pathway tRNA modification; N(7)-methylguanine-tRNA biosynthesis. In terms of biological role, catalyzes the formation of N(7)-methylguanine at position 46 (m7G46) in tRNA. The polypeptide is tRNA (guanine-N(7)-)-methyltransferase (Shewanella baltica (strain OS223)).